Consider the following 352-residue polypeptide: Thymidine kinase (352 aa).

ATP is bound at residue 26–33 (GSMGIGKT). E54 acts as the Proton acceptor in catalysis. Q95 is a binding site for substrate. Residue R185 coordinates ATP. R191 lines the substrate pocket.

Belongs to the herpesviridae thymidine kinase family. In terms of assembly, homodimer.

The catalysed reaction is thymidine + ATP = dTMP + ADP + H(+). In terms of biological role, catalyzes the transfer of the gamma-phospho group of ATP to thymidine to generate dTMP in the salvage pathway of pyrimidine synthesis. The dTMP serves as a substrate for DNA polymerase during viral DNA replication. Allows the virus to be reactivated and to grow in non-proliferative cells lacking a high concentration of phosphorylated nucleic acid precursors. This Gallus gallus (Chicken) protein is Thymidine kinase.